The sequence spans 89 residues: Large ribosomal subunit protein bL27 (89 aa).

Positions 1–22 are disordered; sequence MAHKKGTGSTRNGRDSNAQRLG. Over residues 7–19 the composition is skewed to polar residues; it reads TGSTRNGRDSNAQ.

This sequence belongs to the bacterial ribosomal protein bL27 family.

In Cyanothece sp. (strain PCC 7425 / ATCC 29141), this protein is Large ribosomal subunit protein bL27.